The following is a 138-amino-acid chain: Large ribosomal subunit protein uL16 (138 aa).

Over residues methionine 1–glutamine 13 the composition is skewed to basic residues. The tract at residues methionine 1–threonine 22 is disordered.

The protein belongs to the universal ribosomal protein uL16 family. In terms of assembly, part of the 50S ribosomal subunit.

Binds 23S rRNA and is also seen to make contacts with the A and possibly P site tRNAs. The sequence is that of Large ribosomal subunit protein uL16 from Delftia acidovorans (strain DSM 14801 / SPH-1).